The following is a 39-amino-acid chain: uncharacterized protein (39 aa).

Residues 18-38 (AIKVIALVVLITISAVVYLSV) form a helical membrane-spanning segment.

The protein localises to the membrane. This is an uncharacterized protein from Enterobacteriaceae (Bacteriophage Mu).